Here is a 389-residue protein sequence, read N- to C-terminus: Chalcone synthase 6 (389 aa).

Residue C164 is part of the active site.

Belongs to the thiolase-like superfamily. Chalcone/stilbene synthases family.

The catalysed reaction is (E)-4-coumaroyl-CoA + 3 malonyl-CoA + 3 H(+) = 2',4,4',6'-tetrahydroxychalcone + 3 CO2 + 4 CoA. Its pathway is secondary metabolite biosynthesis; flavonoid biosynthesis. Its function is as follows. The primary product of this enzyme is 4,2',4',6'-tetrahydroxychalcone (also termed naringenin-chalcone or chalcone) which can under specific conditions spontaneously isomerize into naringenin. This Trifolium subterraneum (Subterranean clover) protein is Chalcone synthase 6 (CHS6).